A 327-amino-acid polypeptide reads, in one-letter code: Serine/threonine-protein phosphatase PP1-beta catalytic subunit (327 aa).

An N-acetylalanine modification is found at A2. 4 residues coordinate Mn(2+): D63, H65, D91, and N123. Residue H124 is the Proton donor of the active site. H172 and H247 together coordinate Mn(2+). A disordered region spans residues 305–327 (QYGGLNSGRPVTPPRTANPPKKR). T316 is modified (phosphothreonine).

It belongs to the PPP phosphatase family. PP-1 subfamily. In terms of assembly, PP1 comprises a catalytic subunit, PPP1CA, PPP1CB or PPP1CC, which is folded into its native form by inhibitor 2 and glycogen synthetase kinase 3, and then complexed to one or several targeting or regulatory subunits. The targeting or regulatory subunits determine the substrate specificity of PP1. PPP1R12A, PPP1R12B and PPP1R12C mediate binding to myosin. PPP1R3A (in skeletal muscle), PPP1R3B (in liver), PPP1R3C, PPP1R3D and PPP1R3F (in brain) mediate binding to glycogen. PPP1R15A and PPP1R15B mediate binding to EIF2S1. Part of a complex containing PPP1R15B, PP1 and NCK1/2. Interacts with PPP1R7 and PPP1R12C. Interacts with PPP1R16B. Component of the PTW/PP1 phosphatase complex, composed of PPP1R10/PNUTS, TOX4, WDR82, and PPP1CA or PPP1CB or PPP1CC. Interacts with PPP1R8. Interacts with PPP1R12A and NUAK1; the interaction is direct. Interacts with TRIM28; the interaction is weak. Interacts with FOXP3. Interacts with RRP1B. Interacts with SERPINE1. Interacts with LZTR1. Component of the SHOC2-MRAS-PP1c (SMP) complex consisting of SHOC2, GTP-bound M-Ras/MRAS and the catalytic subunit of protein phosphatase 1 (either PPP1CA, PPP1CB or PPP1CC). SHOC2 and PP1c preferably bind M-Ras/MRAS, but they also bind K-Ras/KRAS, N-Ras/NRAS and H-Ras/HRAS; these interactions are GTP-dependent and both SHOC2 and PP1c are required to form a stable complex. Interacts with SHOC2 in the absence of Ras GTPases. Requires Mn(2+) as cofactor.

It localises to the cytoplasm. The protein localises to the nucleus. The protein resides in the nucleoplasm. It is found in the nucleolus. The catalysed reaction is O-phospho-L-seryl-[protein] + H2O = L-seryl-[protein] + phosphate. The enzyme catalyses O-phospho-L-threonyl-[protein] + H2O = L-threonyl-[protein] + phosphate. It carries out the reaction O-phospho-L-seryl-[myosin light chain] + H2O = L-seryl-[myosin light chain] + phosphate. It catalyses the reaction O-phospho-L-threonyl-[myosin light chain] + H2O = L-threonyl-[myosin light chain] + phosphate. Inhibited by the toxins okadaic acid, tautomycin and microcystin Leu-Arg. The phosphatase activity of the PPP1R15A-PP1 complex toward EIF2S1 is specifically inhibited by Salubrinal, a drug that protects cells from endoplasmic reticulum stress. Functionally, protein phosphatase that associates with over 200 regulatory proteins to form highly specific holoenzymes which dephosphorylate hundreds of biological targets. Protein phosphatase (PP1) is essential for cell division, it participates in the regulation of glycogen metabolism, muscle contractility and protein synthesis. Involved in regulation of ionic conductances and long-term synaptic plasticity. Component of the PTW/PP1 phosphatase complex, which plays a role in the control of chromatin structure and cell cycle progression during the transition from mitosis into interphase. In balance with CSNK1D and CSNK1E, determines the circadian period length, through the regulation of the speed and rhythmicity of PER1 and PER2 phosphorylation. May dephosphorylate CSNK1D and CSNK1E. Core component of the SHOC2-MRAS-PP1c (SMP) holophosphatase complex that regulates the MAPK pathway activation. The SMP complex specifically dephosphorylates the inhibitory phosphorylation at 'Ser-259' of RAF1 kinase, 'Ser-365' of BRAF kinase and 'Ser-214' of ARAF kinase, stimulating their kinase activities. The SMP complex enhances the dephosphorylation activity and substrate specificity of PP1c. The chain is Serine/threonine-protein phosphatase PP1-beta catalytic subunit (PPP1CB) from Bos taurus (Bovine).